The primary structure comprises 180 residues: Large ribosomal subunit protein uL6 (180 aa).

This sequence belongs to the universal ribosomal protein uL6 family. Part of the 50S ribosomal subunit.

Functionally, this protein binds to the 23S rRNA, and is important in its secondary structure. It is located near the subunit interface in the base of the L7/L12 stalk, and near the tRNA binding site of the peptidyltransferase center. The chain is Large ribosomal subunit protein uL6 from Clostridium tetani (strain Massachusetts / E88).